Consider the following 877-residue polypeptide: Alanine--tRNA ligase (877 aa).

Zn(2+) contacts are provided by histidine 567, histidine 571, cysteine 669, and histidine 673.

This sequence belongs to the class-II aminoacyl-tRNA synthetase family. Requires Zn(2+) as cofactor.

The protein resides in the cytoplasm. The enzyme catalyses tRNA(Ala) + L-alanine + ATP = L-alanyl-tRNA(Ala) + AMP + diphosphate. Catalyzes the attachment of alanine to tRNA(Ala) in a two-step reaction: alanine is first activated by ATP to form Ala-AMP and then transferred to the acceptor end of tRNA(Ala). Also edits incorrectly charged Ser-tRNA(Ala) and Gly-tRNA(Ala) via its editing domain. In Rickettsia bellii (strain RML369-C), this protein is Alanine--tRNA ligase.